Consider the following 370-residue polypeptide: MTQKTLLNDTHRALGAKMVDFGGWDMPIHYGSQLDEHHLVRRESGVFDVSHMTVVDLRGDQVRPFLRRLLANSVDKLKVPGKALYSCMLNPRGGVIDDLIVYYLGDDFFRMVVNASTREKDLAWLREQAAPFGVSVEQRPDLAILAVQGPQARAIVIGLARESEREALTKLGRFAALQVQSDDGVELFVARTGYTGEDGFEILLPQDAVVAFWNRLLAAGVKPAGLGARDTLRLEAGMNLYGQDMDEEISPYEAALAWTVSLDEGRDFIGRDALEAQKAAGTARQMIGLVMDEKGVLRHGQAVTTAGGQGEILSGTFSPTLAKGIAFARVPAGELGEVTVDIRGRQVPVRVVKFPFVREGQAQPGVLADA.

This sequence belongs to the GcvT family. In terms of assembly, the glycine cleavage system is composed of four proteins: P, T, L and H.

It catalyses the reaction N(6)-[(R)-S(8)-aminomethyldihydrolipoyl]-L-lysyl-[protein] + (6S)-5,6,7,8-tetrahydrofolate = N(6)-[(R)-dihydrolipoyl]-L-lysyl-[protein] + (6R)-5,10-methylene-5,6,7,8-tetrahydrofolate + NH4(+). In terms of biological role, the glycine cleavage system catalyzes the degradation of glycine. In Stenotrophomonas maltophilia (strain K279a), this protein is Aminomethyltransferase.